The chain runs to 916 residues: Cadherin-4 (916 aa).

The first 20 residues, 1–20, serve as a signal peptide directing secretion; it reads MTAGAGVLLLLLSLSGALRA. Residues 21–169 constitute a propeptide that is removed on maturation; sequence HNEDLTTRET…NANGLRRRKR (149 aa). The interval 124 to 168 is disordered; the sequence is TSSPHSGHKPQKGKKVVALDPSPPPKDTLLPWPQHQNANGLRRRK. Residues 129–138 are compositionally biased toward basic residues; that stretch reads SGHKPQKGKK. Cadherin domains are found at residues 170–277, 278–392, 393–507, 508–613, and 614–724; these read DWVI…RPEF, INQV…PPEF, TAST…APYF, PSNH…DNAP, and ELLP…TIGA. At 170 to 734 the chain is on the extracellular side; that stretch reads DWVIPPINVP…VAAAGLGTGA (565 aa). Residues Asn283, Asn412, Asn557, Asn632, Asn661, and Asn702 are each glycosylated (N-linked (GlcNAc...) asparagine). The helical transmembrane segment at 735-756 threads the bilayer; it reads IVAILICILILLTMVLLFVMWM. At 757 to 916 the chain is on the cytoplasmic side; that stretch reads KRREKERHTK…ADMYGGGEED (160 aa). The interval 806–838 is disordered; the sequence is MGHVPSKAPGVRRVDERPVGAEPQYPIRPMVPH.

As to expression, expressed mainly in brain but also found in other tissues.

Its subcellular location is the cell membrane. Functionally, cadherins are calcium-dependent cell adhesion proteins. They preferentially interact with themselves in a homophilic manner in connecting cells; cadherins may thus contribute to the sorting of heterogeneous cell types. May play an important role in retinal development. In Homo sapiens (Human), this protein is Cadherin-4 (CDH4).